A 662-amino-acid polypeptide reads, in one-letter code: Putative cysteine-rich receptor-like protein kinase 16 (662 aa).

The signal sequence occupies residues 1-26 (MIFIMKLKNLLPIFCFFLVSFSISSA). 2 Gnk2-homologous domains span residues 27 to 131 (QKCG…NRSF) and 137 to 244 (MTPF…LYQF). Topologically, residues 27-277 (QKCGKTGLFK…DDGGKISTRN (251 aa)) are extracellular. N-linked (GlcNAc...) asparagine glycosylation is found at Asn55, Asn64, Asn106, Asn128, Asn145, Asn152, and Asn206. A helical membrane pass occupies residues 278-298 (ILGITVALAFFITVLLVLGYA). The Cytoplasmic portion of the chain corresponds to 299–662 (LSRRRKAYQE…DASITSVDLR (364 aa)). The Protein kinase domain occupies 335–612 (FQKSNKLGHG…VFQMLTNTFL (278 aa)). Residues 341–349 (LGHGGFGEV) and Lys363 each bind ATP. The active-site Proton acceptor is the Asp460.

Belongs to the protein kinase superfamily. Ser/Thr protein kinase family. CRK subfamily.

It localises to the membrane. It carries out the reaction L-seryl-[protein] + ATP = O-phospho-L-seryl-[protein] + ADP + H(+). It catalyses the reaction L-threonyl-[protein] + ATP = O-phospho-L-threonyl-[protein] + ADP + H(+). The polypeptide is Putative cysteine-rich receptor-like protein kinase 16 (CRK16) (Arabidopsis thaliana (Mouse-ear cress)).